Reading from the N-terminus, the 1225-residue chain is ATP-dependent helicase/nuclease subunit A (1225 aa).

One can recognise a UvrD-like helicase ATP-binding domain in the interval 11-478 (AQWTDAQWKS…IDLSKNFRSR (468 aa)). 32–39 (AAAGSGKT) contacts ATP. Positions 479–790 (KEVLATTNYL…RMMTVHSSKG (312 aa)) constitute a UvrD-like helicase C-terminal domain. Over residues 999–1014 (EKPSKQSVSELKRQLE) the composition is skewed to basic and acidic residues. Residues 999–1018 (EKPSKQSVSELKRQLETEES) form a disordered region.

This sequence belongs to the helicase family. AddA subfamily. Heterodimer of AddA and AddB/RexB. It depends on Mg(2+) as a cofactor.

The catalysed reaction is Couples ATP hydrolysis with the unwinding of duplex DNA by translocating in the 3'-5' direction.. It catalyses the reaction ATP + H2O = ADP + phosphate + H(+). In terms of biological role, the heterodimer acts as both an ATP-dependent DNA helicase and an ATP-dependent, dual-direction single-stranded exonuclease. Recognizes the chi site generating a DNA molecule suitable for the initiation of homologous recombination. The AddA nuclease domain is required for chi fragment generation; this subunit has the helicase and 3' -&gt; 5' nuclease activities. The sequence is that of ATP-dependent helicase/nuclease subunit A from Staphylococcus haemolyticus (strain JCSC1435).